The sequence spans 552 residues: ATP synthase subunit alpha (552 aa).

An ATP-binding site is contributed by 173–180; it reads GDRQTGKT. The interval 526-552 is disordered; the sequence is ASPLDPSAVRKESIPVHRAPARTDDEG. Positions 533–552 are enriched in basic and acidic residues; the sequence is AVRKESIPVHRAPARTDDEG.

The protein belongs to the ATPase alpha/beta chains family. F-type ATPases have 2 components, CF(1) - the catalytic core - and CF(0) - the membrane proton channel. CF(1) has five subunits: alpha(3), beta(3), gamma(1), delta(1), epsilon(1). CF(0) has three main subunits: a(1), b(2) and c(9-12). The alpha and beta chains form an alternating ring which encloses part of the gamma chain. CF(1) is attached to CF(0) by a central stalk formed by the gamma and epsilon chains, while a peripheral stalk is formed by the delta and b chains.

It localises to the cell membrane. It catalyses the reaction ATP + H2O + 4 H(+)(in) = ADP + phosphate + 5 H(+)(out). Functionally, produces ATP from ADP in the presence of a proton gradient across the membrane. The alpha chain is a regulatory subunit. This chain is ATP synthase subunit alpha, found in Frankia alni (strain DSM 45986 / CECT 9034 / ACN14a).